Reading from the N-terminus, the 491-residue chain is Protein nucleotidyltransferase YdiU (491 aa).

Positions 94, 96, 97, 117, 129, 130, 180, and 187 each coordinate ATP. The Proton acceptor role is filled by aspartate 256. The Mg(2+) site is built by asparagine 257 and aspartate 266. Aspartate 266 serves as a coordination point for ATP.

Belongs to the SELO family. The cofactor is Mg(2+). Requires Mn(2+) as cofactor.

It catalyses the reaction L-seryl-[protein] + ATP = 3-O-(5'-adenylyl)-L-seryl-[protein] + diphosphate. The enzyme catalyses L-threonyl-[protein] + ATP = 3-O-(5'-adenylyl)-L-threonyl-[protein] + diphosphate. The catalysed reaction is L-tyrosyl-[protein] + ATP = O-(5'-adenylyl)-L-tyrosyl-[protein] + diphosphate. It carries out the reaction L-histidyl-[protein] + UTP = N(tele)-(5'-uridylyl)-L-histidyl-[protein] + diphosphate. It catalyses the reaction L-seryl-[protein] + UTP = O-(5'-uridylyl)-L-seryl-[protein] + diphosphate. The enzyme catalyses L-tyrosyl-[protein] + UTP = O-(5'-uridylyl)-L-tyrosyl-[protein] + diphosphate. In terms of biological role, nucleotidyltransferase involved in the post-translational modification of proteins. It can catalyze the addition of adenosine monophosphate (AMP) or uridine monophosphate (UMP) to a protein, resulting in modifications known as AMPylation and UMPylation. The chain is Protein nucleotidyltransferase YdiU from Clostridium botulinum (strain Alaska E43 / Type E3).